Reading from the N-terminus, the 121-residue chain is Flagellar protein FliT (121 aa).

The tract at residues 1-50 (MNNAPHLYFAWQQLVEKSQLMLRLATEEQWDELITSEMAYVNAVQEIAHL) is required for homodimerization. The fliD binding stretch occupies residues 60–98 (MQEQLRPMLRLILDNESKVKQLLQIRMDELAKLVGQSSV).

This sequence belongs to the FliT family. As to quaternary structure, homodimer. Interacts with FliD and FlhC.

It is found in the cytoplasm. It localises to the cytosol. In terms of biological role, dual-function protein that regulates the transcription of class 2 flagellar operons and that also acts as an export chaperone for the filament-capping protein FliD. As a transcriptional regulator, acts as an anti-FlhDC factor; it directly binds FlhC, thus inhibiting the binding of the FlhC/FlhD complex to class 2 promoters, resulting in decreased expression of class 2 flagellar operons. As a chaperone, effects FliD transition to the membrane by preventing its premature polymerization, and by directing it to the export apparatus. The sequence is that of Flagellar protein FliT from Escherichia coli (strain 55989 / EAEC).